We begin with the raw amino-acid sequence, 209 residues long: RNA chaperone ProQ (209 aa).

The segment at 105-148 (ESQDKAKAKRAALAPKPAAKKAPKKVAVPQRAKTERPAKPAPKA) is disordered.

This sequence belongs to the ProQ family.

It localises to the cytoplasm. RNA chaperone with significant RNA binding, RNA strand exchange and RNA duplexing activities. The chain is RNA chaperone ProQ from Shewanella baltica (strain OS223).